We begin with the raw amino-acid sequence, 448 residues long: Integrator complex subunit 15 (448 aa).

It belongs to the Integrator subunit 15 family. As to quaternary structure, component of the Integrator complex, composed of core subunits INTS1, INTS2, INTS3, INTS4, INTS5, INTS6, INTS7, INTS8, INTS9/RC74, INTS10, INTS11/CPSF3L, INTS12, INTS13, INTS14 and INTS15. The core complex associates with protein phosphatase 2A subunits PPP2CA and PPP2R1A, to form the Integrator-PP2A (INTAC) complex. INTS15 is part of the tail subcomplex, composed of INTS10, INTS13, INTS14 and INTS15.

It localises to the nucleus. Its subcellular location is the chromosome. Functionally, component of the integrator complex, a multiprotein complex that terminates RNA polymerase II (Pol II) transcription in the promoter-proximal region of genes. The integrator complex provides a quality checkpoint during transcription elongation by driving premature transcription termination of transcripts that are unfavorably configured for transcriptional elongation: the complex terminates transcription by (1) catalyzing dephosphorylation of the C-terminal domain (CTD) of Pol II subunit POLR2A/RPB1 and SUPT5H/SPT5, (2) degrading the exiting nascent RNA transcript via endonuclease activity and (3) promoting the release of Pol II from bound DNA. The integrator complex is also involved in terminating the synthesis of non-coding Pol II transcripts, such as enhancer RNAs (eRNAs), small nuclear RNAs (snRNAs), telomerase RNAs and long non-coding RNAs (lncRNAs). INTS15 is part of the integrator tail module that acts as a platform for the recruitment of transcription factors at promoters. Within the integrator complex, INTS15 is required to bridge different integrator modules. This Mus musculus (Mouse) protein is Integrator complex subunit 15.